The sequence spans 213 residues: MSKMAEEKAAAVGGLGGAGAADAAQQQQLAAGEAAAARVRPVETLLRAAPLGLCVAAMTVMLRNQQSNEYGAVAYSDLGGFKYLVYANGLCAAYSLVSAFYTAVPRPATVSRSWLVFLLDQVFTYLILAAGAAAAELLYLAYNGDKEVTWSEACGVFGSFCRQARTSVAITFGTVLCFILLSLISSYRLFSAYEAPPSSALGSKGVEIAAYPR.

Topologically, residues 1–41 (MSKMAEEKAAAVGGLGGAGAADAAQQQQLAAGEAAAARVRP) are cytoplasmic. The chain crosses the membrane as a helical span at residues 42-62 (VETLLRAAPLGLCVAAMTVML). At 63 to 83 (RNQQSNEYGAVAYSDLGGFKY) the chain is on the extracellular side. Residues 84–104 (LVYANGLCAAYSLVSAFYTAV) traverse the membrane as a helical segment. Residues 105 to 113 (PRPATVSRS) lie on the Cytoplasmic side of the membrane. A helical transmembrane segment spans residues 114–134 (WLVFLLDQVFTYLILAAGAAA). Topologically, residues 135–166 (AELLYLAYNGDKEVTWSEACGVFGSFCRQART) are extracellular. The helical transmembrane segment at 167-187 (SVAITFGTVLCFILLSLISSY) threads the bilayer. Topologically, residues 188-213 (RLFSAYEAPPSSALGSKGVEIAAYPR) are cytoplasmic.

The protein belongs to the Casparian strip membrane proteins (CASP) family. As to quaternary structure, homodimer and heterodimers.

The protein localises to the cell membrane. The polypeptide is CASP-like protein 2A1 (Zea mays (Maize)).